A 409-amino-acid chain; its full sequence is Multifunctional CCA protein (409 aa).

2 residues coordinate ATP: glycine 8 and arginine 11. Positions 8 and 11 each coordinate CTP. Mg(2+)-binding residues include aspartate 21 and aspartate 23. Arginine 91, arginine 137, and arginine 140 together coordinate ATP. Residues arginine 91, arginine 137, and arginine 140 each contribute to the CTP site. The 102-residue stretch at 228–329 (TGIHTLMVVE…ITLMDQNDAW (102 aa)) folds into the HD domain.

The protein belongs to the tRNA nucleotidyltransferase/poly(A) polymerase family. Bacterial CCA-adding enzyme type 1 subfamily. As to quaternary structure, monomer. Can also form homodimers and oligomers. Requires Mg(2+) as cofactor. The cofactor is Ni(2+).

It catalyses the reaction a tRNA precursor + 2 CTP + ATP = a tRNA with a 3' CCA end + 3 diphosphate. The catalysed reaction is a tRNA with a 3' CCA end + 2 CTP + ATP = a tRNA with a 3' CCACCA end + 3 diphosphate. Catalyzes the addition and repair of the essential 3'-terminal CCA sequence in tRNAs without using a nucleic acid template. Adds these three nucleotides in the order of C, C, and A to the tRNA nucleotide-73, using CTP and ATP as substrates and producing inorganic pyrophosphate. tRNA 3'-terminal CCA addition is required both for tRNA processing and repair. Also involved in tRNA surveillance by mediating tandem CCA addition to generate a CCACCA at the 3' terminus of unstable tRNAs. While stable tRNAs receive only 3'-terminal CCA, unstable tRNAs are marked with CCACCA and rapidly degraded. This Psychromonas ingrahamii (strain DSM 17664 / CCUG 51855 / 37) protein is Multifunctional CCA protein.